The sequence spans 394 residues: Argininosuccinate synthase (394 aa).

ATP is bound by residues 7–15 (AYSGGLDTS) and alanine 34. The L-citrulline site is built by tyrosine 85 and serine 90. ATP is bound at residue glycine 115. L-aspartate contacts are provided by threonine 117, asparagine 121, and aspartate 122. Asparagine 121 serves as a coordination point for L-citrulline. L-citrulline is bound by residues arginine 125, serine 176, serine 185, glutamate 261, and tyrosine 273.

The protein belongs to the argininosuccinate synthase family. Type 1 subfamily. In terms of assembly, homotetramer.

Its subcellular location is the cytoplasm. It carries out the reaction L-citrulline + L-aspartate + ATP = 2-(N(omega)-L-arginino)succinate + AMP + diphosphate + H(+). The protein operates within amino-acid biosynthesis; L-arginine biosynthesis; L-arginine from L-ornithine and carbamoyl phosphate: step 2/3. This is Argininosuccinate synthase from Ehrlichia ruminantium (strain Welgevonden).